Here is a 362-residue protein sequence, read N- to C-terminus: 3-isopropylmalate dehydrogenase (362 aa).

78-91 is a binding site for NAD(+); it reads GYKWDSLPPHQRPE. Residues arginine 98, arginine 108, arginine 136, and aspartate 226 each coordinate substrate. Mg(2+)-binding residues include aspartate 226, aspartate 250, and aspartate 254. 284-296 serves as a coordination point for NAD(+); it reads GSAPDIAGQDKAN.

This sequence belongs to the isocitrate and isopropylmalate dehydrogenases family. LeuB type 1 subfamily. Homodimer. It depends on Mg(2+) as a cofactor. Mn(2+) is required as a cofactor.

It localises to the cytoplasm. The catalysed reaction is (2R,3S)-3-isopropylmalate + NAD(+) = 4-methyl-2-oxopentanoate + CO2 + NADH. The protein operates within amino-acid biosynthesis; L-leucine biosynthesis; L-leucine from 3-methyl-2-oxobutanoate: step 3/4. In terms of biological role, catalyzes the oxidation of 3-carboxy-2-hydroxy-4-methylpentanoate (3-isopropylmalate) to 3-carboxy-4-methyl-2-oxopentanoate. The product decarboxylates to 4-methyl-2 oxopentanoate. In Nostoc sp. (strain PCC 7120 / SAG 25.82 / UTEX 2576), this protein is 3-isopropylmalate dehydrogenase.